We begin with the raw amino-acid sequence, 306 residues long: Ribosomal RNA small subunit methyltransferase H (306 aa).

Residues 36–38 (GGH), Asp56, Phe80, Asp97, and Gln104 each bind S-adenosyl-L-methionine. Residues 280–306 (ASEEEVAGNPRSRSAVMRVAERTGEAA) are disordered.

The protein belongs to the methyltransferase superfamily. RsmH family.

It localises to the cytoplasm. The catalysed reaction is cytidine(1402) in 16S rRNA + S-adenosyl-L-methionine = N(4)-methylcytidine(1402) in 16S rRNA + S-adenosyl-L-homocysteine + H(+). In terms of biological role, specifically methylates the N4 position of cytidine in position 1402 (C1402) of 16S rRNA. In Polaromonas naphthalenivorans (strain CJ2), this protein is Ribosomal RNA small subunit methyltransferase H.